Reading from the N-terminus, the 287-residue chain is Lys-63-specific deubiquitinase (287 aa).

An MPN domain is found at 33-176 (VHLESDAFLV…YTCFQSVQAQ (144 aa)). Zn(2+) is bound by residues H119, H121, and D132. Residues 119–132 (HSHPHITVWPSHVD) carry the JAMM motif motif. A coiled-coil region spans residues 256 to 283 (LQWLEDRLEQNKQSIITLQKEKELLTQE).

The protein belongs to the peptidase M67A family. BRCC36 subfamily. Monomer. Homodimer. Component of the BRISC complex, at least composed of abraxas2, brcc3, babam1 and babam2. Interacts with abraxas2; the interaction is direct and may form a heterotetramer. Component of the BRCA1-A complex. Both the BRCA1-A complex and the BRISC complex bind polyubiquitin. Requires Zn(2+) as cofactor.

It localises to the nucleus. Its subcellular location is the cytoplasm. The protein resides in the cytoskeleton. The protein localises to the spindle pole. Its function is as follows. Metalloprotease that specifically cleaves 'Lys-63'-linked polyubiquitin chains, leaving the last ubiquitin chain attached to its substrates. Catalytic subunit of the BRISC complex, a multiprotein complex that specifically cleaves 'Lys-63'-linked ubiquitin in various substrates; brcc3 does not have activity by itself, but needs to be associated into a higher-order assembly, for minimal in vitro activity. This is Lys-63-specific deubiquitinase from Danio rerio (Zebrafish).